A 108-amino-acid chain; its full sequence is UPF0060 membrane protein YnfA (108 aa).

Residues 1–5 lie on the Periplasmic side of the membrane; that stretch reads MLKTT. Residues 6–26 form a helical membrane-spanning segment; that stretch reads LLFFVTALCEIIGCFLPWLWI. Residues 27–30 are Cytoplasmic-facing; that stretch reads KRGA. A helical membrane pass occupies residues 31–51; sequence SVWWLLPAAASLALFVWLLTL. Over 52 to 60 the chain is Periplasmic; it reads HPAASGRVY. Residues 61-81 traverse the membrane as a helical segment; the sequence is AAYGGVYVCTALLWLRVVDGV. Topologically, residues 82 to 84 are cytoplasmic; sequence RLT. The helical transmembrane segment at 85 to 105 threads the bilayer; it reads VYDWSGALIALCGMLIIVVGW. Residues 106-108 lie on the Periplasmic side of the membrane; sequence GRT.

Belongs to the UPF0060 family.

The protein localises to the cell inner membrane. The sequence is that of UPF0060 membrane protein YnfA from Salmonella typhi.